The sequence spans 233 residues: Sugar fermentation stimulation protein homolog (233 aa).

This sequence belongs to the SfsA family.

The protein is Sugar fermentation stimulation protein homolog of Pyrobaculum neutrophilum (strain DSM 2338 / JCM 9278 / NBRC 100436 / V24Sta) (Thermoproteus neutrophilus).